The primary structure comprises 413 residues: Serine hydroxymethyltransferase (413 aa).

(6S)-5,6,7,8-tetrahydrofolate-binding positions include leucine 119 and 123-125; that span reads GHL. Position 228 is an N6-(pyridoxal phosphate)lysine (lysine 228).

The protein belongs to the SHMT family. As to quaternary structure, homodimer. It depends on pyridoxal 5'-phosphate as a cofactor.

It localises to the cytoplasm. The enzyme catalyses (6R)-5,10-methylene-5,6,7,8-tetrahydrofolate + glycine + H2O = (6S)-5,6,7,8-tetrahydrofolate + L-serine. Its pathway is one-carbon metabolism; tetrahydrofolate interconversion. It functions in the pathway amino-acid biosynthesis; glycine biosynthesis; glycine from L-serine: step 1/1. Functionally, catalyzes the reversible interconversion of serine and glycine with tetrahydrofolate (THF) serving as the one-carbon carrier. This reaction serves as the major source of one-carbon groups required for the biosynthesis of purines, thymidylate, methionine, and other important biomolecules. Also exhibits THF-independent aldolase activity toward beta-hydroxyamino acids, producing glycine and aldehydes, via a retro-aldol mechanism. This chain is Serine hydroxymethyltransferase, found in Caldanaerobacter subterraneus subsp. tengcongensis (strain DSM 15242 / JCM 11007 / NBRC 100824 / MB4) (Thermoanaerobacter tengcongensis).